Here is a 117-residue protein sequence, read N- to C-terminus: Minor capsid protein p17 (117 aa).

N-linked (GlcNAc...) asparagine; by host glycosylation occurs at N12. The helical transmembrane segment at 39 to 59 (AIILGILILLVIILIIVAIVY) threads the bilayer. N-linked (GlcNAc...) asparagine; by host glycans are attached at residues N61 and N97.

Belongs to the asfivirus minor capsid protein p17 family. In terms of assembly, interacts with the minor capsid protein M1249L and with the hexon capsid protein p72 capsomers; these interactions form a rigid zipper structure that stabilizes the capsomers. Interacts with host STING1.

The protein localises to the virion membrane. It is found in the host endoplasmic reticulum membrane. In terms of biological role, together with the penton and the other minor capsid proteins (M1249L, p49), forms a complicated network immediately below the outer capsid shell, stabilizing the whole capsid. Three copies of p17 encircle each p72 capsomer in the inner capsid shell, anchoring p72 capsomers on the inner membrane. Required for the assembly of the capsid and icosahedral morphogenesis. Additionally, inhibits the host cGAS-STING pathway through its interaction with STING1 and subsequent interference of the recruitment of downstream components TBK1 and IKBKE. This is Minor capsid protein p17 from Ornithodoros (relapsing fever ticks).